Here is a 967-residue protein sequence, read N- to C-terminus: Sarcosine oxidase subunit alpha (967 aa).

NAD(+)-binding residues include Ala141, Asp160, Glu161, Arg162, Ser168, Val207, Ala420, and Thr427. Thr694 and Glu786 together coordinate (6R)-5,10-methylene-5,6,7,8-tetrahydrofolate.

The protein belongs to the GcvT family. As to quaternary structure, heterotetramer composed of subunits alpha (SoxA), beta (SoxB), gamma (SoxG) and delta (SoxD). It depends on NAD(+) as a cofactor.

Its subcellular location is the cytoplasm. The enzyme catalyses sarcosine + (6S)-5,6,7,8-tetrahydrofolate + O2 = (6R)-5,10-methylene-5,6,7,8-tetrahydrofolate + glycine + H2O2. It carries out the reaction sarcosine + O2 + H2O = formaldehyde + glycine + H2O2. In terms of biological role, in the presence of tetrahydrofolate, catalyzes the oxidative demethylation of sarcosine to yield glycine, 5,10-methylenetetrahydrofolate and hydrogen peroxide. In the absence of tetrahydrofolate, catalyzes the oxidative demethylation of sarcosine to yield glycine, formaldehyde and hydrogen peroxide. This chain is Sarcosine oxidase subunit alpha, found in Corynebacterium sp. (strain P-1).